A 588-amino-acid chain; its full sequence is Zeta-carotene desaturase, chloroplastic/chromoplastic (588 aa).

It belongs to the zeta carotene desaturase family. Requires NAD(+) as cofactor. NADP(+) is required as a cofactor. The cofactor is FAD.

It localises to the plastid. The protein localises to the chloroplast. The protein resides in the chromoplast. The enzyme catalyses 9,9'-di-cis-zeta-carotene + 2 a quinone = 7,7',9,9'-tetra-cis-lycopene + 2 a quinol. It functions in the pathway carotenoid biosynthesis; lycopene biosynthesis. In terms of biological role, catalyzes the conversion of zeta-carotene to lycopene via the intermediary of neurosporene. It carries out two consecutive desaturations (introduction of double bonds) at positions C-7 and C-7'. This is Zeta-carotene desaturase, chloroplastic/chromoplastic (ZDS) from Solanum lycopersicum (Tomato).